Reading from the N-terminus, the 570-residue chain is Sulfite reductase [NADPH] hemoprotein beta-component (570 aa).

[4Fe-4S] cluster contacts are provided by Cys-434, Cys-440, Cys-479, and Cys-483. Cys-483 contacts siroheme.

The protein belongs to the nitrite and sulfite reductase 4Fe-4S domain family. Alpha(8)-beta(8). The alpha component is a flavoprotein, the beta component is a hemoprotein. It depends on siroheme as a cofactor. [4Fe-4S] cluster is required as a cofactor.

It catalyses the reaction hydrogen sulfide + 3 NADP(+) + 3 H2O = sulfite + 3 NADPH + 4 H(+). The protein operates within sulfur metabolism; hydrogen sulfide biosynthesis; hydrogen sulfide from sulfite (NADPH route): step 1/1. In terms of biological role, component of the sulfite reductase complex that catalyzes the 6-electron reduction of sulfite to sulfide. This is one of several activities required for the biosynthesis of L-cysteine from sulfate. This Escherichia coli (strain ATCC 8739 / DSM 1576 / NBRC 3972 / NCIMB 8545 / WDCM 00012 / Crooks) protein is Sulfite reductase [NADPH] hemoprotein beta-component.